We begin with the raw amino-acid sequence, 445 residues long: MREIIHLQTGQCGNQVGTAFWQTIHGEHGLDQDGVFRGSDEQQSERLSVYFTEAAKQKYVPRAVLVDLEPATMDAIRSGPLGDFFRPDNMVYGQSGAGNNWAKGHYTEGAELVDQVLDVVRREAEACDSLQGFQITHSLGGGTGSGMGTLLIAKVREEFPDRMMATFSVLPSAKVSEVVVEPYNATLSIHQLVENSDETFCIDNEALYDICRRTLKQAHPSYGHLNHLVSRVMSGLTTGFRFPGQLNADLRKLAVNLVPFPRLHFFTVGFAPLTSSASFSNLGIAELTQQMFDPKNVMLASDFRDGRFLTCSTMFRGKVSMKQVEEQIQAIKNKNSANFVEWIPNNIQTAHCSVPPKGLDVSSTFIGNSTAIQNSFRRVGDQFSLMFRRKAFLHWYTGEGMDEMEFTEAESNMNDLVSEYQQYQDAGMDDEYGEEYEDEAPAEEE.

Residues Gln11, Glu69, Ser138, Gly142, Thr143, Gly144, Asn204, and Asn226 each contribute to the GTP site. Mg(2+) is bound at residue Glu69. A disordered region spans residues 422-445 (QYQDAGMDDEYGEEYEDEAPAEEE). The span at 427-445 (GMDDEYGEEYEDEAPAEEE) shows a compositional bias: acidic residues.

It belongs to the tubulin family. In terms of assembly, dimer of alpha and beta chains. A typical microtubule is a hollow water-filled tube with an outer diameter of 25 nm and an inner diameter of 15 nM. Alpha-beta heterodimers associate head-to-tail to form protofilaments running lengthwise along the microtubule wall with the beta-tubulin subunit facing the microtubule plus end conferring a structural polarity. Microtubules usually have 13 protofilaments but different protofilament numbers can be found in some organisms and specialized cells. Mg(2+) serves as cofactor.

Its subcellular location is the cytoplasm. It localises to the cytoskeleton. Its function is as follows. Tubulin is the major constituent of microtubules, a cylinder consisting of laterally associated linear protofilaments composed of alpha- and beta-tubulin heterodimers. Microtubules grow by the addition of GTP-tubulin dimers to the microtubule end, where a stabilizing cap forms. Below the cap, tubulin dimers are in GDP-bound state, owing to GTPase activity of alpha-tubulin. The sequence is that of Tubulin beta-1 chain (TUB1) from Colletotrichum graminicola (Maize anthracnose fungus).